The primary structure comprises 527 residues: Heat shock factor protein HSF8 (527 aa).

Residues 39–133 (PFLVKTYDMV…KSISRRKPAH (95 aa)) mediate DNA binding. Disordered regions lie at residues 128–158 (RRKP…HSAS), 241–273 (NESN…ADGQ), and 297–341 (SSPR…TSGK). The segment covering 134–152 (GHAQQQQQPHGNAQQQMQP) has biased composition (low complexity). The span at 317 to 326 (SPQSNASSGR) shows a compositional bias: polar residues.

The protein belongs to the HSF family. As to quaternary structure, homotrimer. In terms of processing, exhibits temperature-dependent phosphorylation.

It is found in the nucleus. DNA-binding protein that specifically binds heat shock promoter elements (HSE) and activates transcription. This is Heat shock factor protein HSF8 (HSF8) from Solanum lycopersicum (Tomato).